A 112-amino-acid polypeptide reads, in one-letter code: MQVADISLQGDAKKGANLFKTRCAQCHTLKAGEGNKIGPELHGLFGRKTGSVAGYSYTDANKQKGIEWKDDTLFEYLENPKKYIPGTKMAFGGLKKPKDRNDLITFLEEETK.

Heme c contacts are provided by Cys-23, Cys-26, and His-27. Position 81 is an N6,N6,N6-trimethyllysine (Lys-81). Met-89 lines the heme c pocket. Lys-95 bears the N6,N6,N6-trimethyllysine mark.

The protein belongs to the cytochrome c family. Binds 1 heme c group covalently per subunit.

It is found in the mitochondrion intermembrane space. Electron carrier protein. The oxidized form of the cytochrome c heme group can accept an electron from the heme group of the cytochrome c1 subunit of cytochrome reductase. Cytochrome c then transfers this electron to the cytochrome oxidase complex, the final protein carrier in the mitochondrial electron-transport chain. The protein is Cytochrome c (CC-1) of Arabidopsis thaliana (Mouse-ear cress).